A 317-amino-acid chain; its full sequence is Ribosomal protein L11 methyltransferase (317 aa).

S-adenosyl-L-methionine is bound by residues Thr-158, Gly-179, Asp-201, and Asn-244.

This sequence belongs to the methyltransferase superfamily. PrmA family.

It is found in the cytoplasm. It catalyses the reaction L-lysyl-[protein] + 3 S-adenosyl-L-methionine = N(6),N(6),N(6)-trimethyl-L-lysyl-[protein] + 3 S-adenosyl-L-homocysteine + 3 H(+). Its function is as follows. Methylates ribosomal protein L11. The chain is Ribosomal protein L11 methyltransferase from Streptococcus pyogenes serotype M4 (strain MGAS10750).